Here is a 728-residue protein sequence, read N- to C-terminus: Beta-porphyranase A (728 aa).

Positions 1–22 are cleaved as a signal peptide; it reads MSYKYIFLLSAFTLGVPPGIYC. H53, K76, W78, K87, H114, and N151 together coordinate substrate. The Proton donor role is filled by E152. Positions 235, 279, 326, and 331 each coordinate substrate. The Nucleophile role is filled by E279. Positions 599-701 constitute a CBM-cenC domain; that stretch reads TLQNGTFSEG…AVSFDFNSTV (103 aa).

This sequence belongs to the glycosyl hydrolase 86 family.

The catalysed reaction is Hydrolysis of beta-D-galactopyranose-(1-&gt;4)-alpha-L-galactopyranose-6-sulfate linkages in porphyran.. Functionally, cleaves the sulfated polysaccharide porphyran at the (1-&gt;4) linkages between beta-D-galactopyranose and alpha-L-galactopyranose-6-sulfate, forming mostly the disaccharide alpha-L-galactopyranose-6-sulfate-(1-&gt;3)-beta-D-galactose. Some longer oligosaccharides of even number of residues are also observed. Inactive on the non-sulfated agarose portion of the porphyran backbone. Can also use methylated galactoses. The protein is Beta-porphyranase A of Phocaeicola plebeius (strain DSM 17135 / JCM 12973 / CCUG 54634 / M2) (Bacteroides plebeius).